A 301-amino-acid polypeptide reads, in one-letter code: 4-diphosphocytidyl-2-C-methyl-D-erythritol kinase (301 aa).

Residue K10 is part of the active site. An ATP-binding site is contributed by 96-106 (PMGGGVGGGSS). D138 is a catalytic residue.

It belongs to the GHMP kinase family. IspE subfamily.

It carries out the reaction 4-CDP-2-C-methyl-D-erythritol + ATP = 4-CDP-2-C-methyl-D-erythritol 2-phosphate + ADP + H(+). The protein operates within isoprenoid biosynthesis; isopentenyl diphosphate biosynthesis via DXP pathway; isopentenyl diphosphate from 1-deoxy-D-xylulose 5-phosphate: step 3/6. In terms of biological role, catalyzes the phosphorylation of the position 2 hydroxy group of 4-diphosphocytidyl-2C-methyl-D-erythritol. The polypeptide is 4-diphosphocytidyl-2-C-methyl-D-erythritol kinase (Alcanivorax borkumensis (strain ATCC 700651 / DSM 11573 / NCIMB 13689 / SK2)).